The primary structure comprises 550 residues: Arginine--tRNA ligase (550 aa).

The short motif at 125 to 135 (ANPTGPLHIGH) is the 'HIGH' region element.

This sequence belongs to the class-I aminoacyl-tRNA synthetase family. Monomer.

It is found in the cytoplasm. It carries out the reaction tRNA(Arg) + L-arginine + ATP = L-arginyl-tRNA(Arg) + AMP + diphosphate. The polypeptide is Arginine--tRNA ligase (Lawsonia intracellularis (strain PHE/MN1-00)).